Here is a 196-residue protein sequence, read N- to C-terminus: Imidazoleglycerol-phosphate dehydratase (196 aa).

The protein belongs to the imidazoleglycerol-phosphate dehydratase family.

It localises to the cytoplasm. The enzyme catalyses D-erythro-1-(imidazol-4-yl)glycerol 3-phosphate = 3-(imidazol-4-yl)-2-oxopropyl phosphate + H2O. The protein operates within amino-acid biosynthesis; L-histidine biosynthesis; L-histidine from 5-phospho-alpha-D-ribose 1-diphosphate: step 6/9. This is Imidazoleglycerol-phosphate dehydratase from Zymomonas mobilis subsp. mobilis (strain ATCC 31821 / ZM4 / CP4).